A 255-amino-acid polypeptide reads, in one-letter code: Small ribosomal subunit protein uS2 (255 aa).

The segment at 226 to 255 is disordered; the sequence is QGVSNEEVAAEQNIDLDEKEKSEETEATEE.

Belongs to the universal ribosomal protein uS2 family.

This is Small ribosomal subunit protein uS2 from Staphylococcus aureus (strain JH1).